Here is a 210-residue protein sequence, read N- to C-terminus: Floral homeotic protein FBP1 (210 aa).

One can recognise an MADS-box domain in the interval 3 to 57; it reads RGKIEIKRIENSSNRQVTYSKRRNGILKKAKEISVLCDARVSVIIFASSGKMHEF. One can recognise a K-box domain in the interval 82 to 173; the sequence is HENLDNEINK…QLEIATMNRN (92 aa).

In terms of tissue distribution, petals.

It is found in the nucleus. In terms of biological role, probable transcription factor. This is Floral homeotic protein FBP1 (FBP1) from Petunia hybrida (Petunia).